A 306-amino-acid polypeptide reads, in one-letter code: Metal ABC transporter substrate-binding lipoprotein SloC (306 aa).

The signal sequence occupies residues 1-19; the sequence is MKKLSLLLLVCLSLLGLFA. C20 is lipidated: N-palmitoyl cysteine. Residue C20 is the site of S-diacylglycerol cysteine attachment. Residues H64, H136, E202, and D277 each coordinate a divalent metal cation.

It belongs to the bacterial solute-binding protein 9 family. Lipoprotein receptor antigen (Lrai) subfamily.

It localises to the cell membrane. Part of the ATP-binding cassette (ABC) transport system SloABC involved in metal import. Binds a metal with high affinity and specificity and delivers it to the membrane permease for translocation into the cytoplasm. May act as an adhesin which is involved on adherence to extracellular matrix. It is an important factor in pathogenesis and infection. May contribute to the formation and accumulation of dental plaque. The sequence is that of Metal ABC transporter substrate-binding lipoprotein SloC (sloC) from Streptococcus mutans serotype c (strain ATCC 700610 / UA159).